Reading from the N-terminus, the 135-residue chain is Poly [ADP-ribose] polymerase 1 (135 aa).

Residues 1-21 (QAKVEMLDNLLDIEVAYSLLK) form the PARP alpha-helical domain. Positions 30-135 (DPIDINYEKL…APVTGYMFGK (106 aa)) constitute a PARP catalytic domain. NAD(+)-binding positions include 104-106 (HGS), Gly-113, and Arg-120. Residue Lys-135 is part of the active site.

Belongs to the ARTD/PARP family. As to quaternary structure, homodimer; PARP-type zinc-fingers from separate parp1 molecules form a dimer module that specifically recognizes DNA strand breaks. Post-translationally, poly-ADP-ribosylated on serine, glutamate and aspartate residues by autocatalysis. Auto-ADP-ribosylation on serine takes place following interaction with HPF1. Auto poly-ADP-ribosylation on serine residues promotes its dissociation from chromatin.

Its subcellular location is the chromosome. The protein resides in the nucleus. It localises to the nucleolus. It is found in the cytoplasm. The protein localises to the cytosol. It catalyses the reaction NAD(+) + (ADP-D-ribosyl)n-acceptor = nicotinamide + (ADP-D-ribosyl)n+1-acceptor + H(+).. The enzyme catalyses L-seryl-[protein] + NAD(+) = O-(ADP-D-ribosyl)-L-seryl-[protein] + nicotinamide + H(+). The catalysed reaction is L-aspartyl-[protein] + NAD(+) = 4-O-(ADP-D-ribosyl)-L-aspartyl-[protein] + nicotinamide. It carries out the reaction L-glutamyl-[protein] + NAD(+) = 5-O-(ADP-D-ribosyl)-L-glutamyl-[protein] + nicotinamide. It catalyses the reaction L-tyrosyl-[protein] + NAD(+) = O-(ADP-D-ribosyl)-L-tyrosyl-[protein] + nicotinamide + H(+). The enzyme catalyses L-histidyl-[protein] + NAD(+) = N(tele)-(ADP-D-ribosyl)-L-histidyl-[protein] + nicotinamide + H(+). ADP-ribosyltransferase activity is regulated via an allosteric activation mechanism. In absence of activation signal, parp1 is autoinhibited by the PARP alpha-helical domain (also named HD region), which prevents effective NAD(+)-binding. Activity is highly stimulated by signals, such as DNA strand breaks. Binding to damaged DNA unfolds the PARP alpha-helical domain, relieving autoinhibition. Poly-ADP-ribosyltransferase activity is tightly regulated and parp1 is removed from damaged chromatin following initial poly-ADP-ribosylation of chromatin to avoid prolonged residence (trapping) that has cytotoxic consequences. A number of factors or post-translational modifications (auto-poly-ADP-ribosylation) promote parp1 removal from chromatin. Poly-ADP-ribosyltransferase that mediates poly-ADP-ribosylation of proteins and plays a key role in DNA repair. Mediates glutamate, aspartate, serine, histidine or tyrosine ADP-ribosylation of proteins: the ADP-D-ribosyl group of NAD(+) is transferred to the acceptor carboxyl group of target residues and further ADP-ribosyl groups are transferred to the 2'-position of the terminal adenosine moiety, building up a polymer with an average chain length of 20-30 units. Serine ADP-ribosylation of proteins constitutes the primary form of ADP-ribosylation of proteins in response to DNA damage. Specificity for the different amino acids is conferred by interacting factors, such as hpf1 and nmnat1. Following interaction with hpf1, catalyzes serine ADP-ribosylation of target proteins; hpf1 confers serine specificity by completing the parp1 active site. Also catalyzes tyrosine ADP-ribosylation of target proteins following interaction with hpf1. Following interaction with nmnat1, catalyzes glutamate and aspartate ADP-ribosylation of target proteins; nmnat1 confers glutamate and aspartate specificity. Parp1 initiates the repair of DNA breaks: recognizes and binds DNA breaks within chromatin and recruits hpf1, licensing serine ADP-ribosylation of target proteins, such as histones (H2BS6ADPr and H3S10ADPr), thereby promoting decompaction of chromatin and the recruitment of repair factors leading to the reparation of DNA strand breaks. In addition to base excision repair (BER) pathway, also involved in double-strand breaks (DSBs) repair. Mediates the poly-ADP-ribosylation of a number of proteins. In addition to proteins, also able to ADP-ribosylate DNA: catalyzes ADP-ribosylation of DNA strand break termini containing terminal phosphates and a 2'-OH group in single- and double-stranded DNA, respectively. Parp1-mediated DNA repair in neurons plays a role in sleep: senses DNA damage in neurons and promotes sleep, facilitating efficient DNA repair. In addition to DNA repair, also involved in other processes, such as transcription regulation, programmed cell death, membrane repair, adipogenesis and innate immunity. Acts as a repressor of transcription: binds to nucleosomes and modulates chromatin structure in a manner similar to histone H1, thereby altering RNA polymerase II. Acts both as a positive and negative regulator of transcription elongation, depending on the context. Poly-ADP-ribose chains generated by parp1 also play a role in poly-ADP-ribose-dependent cell death, a process named parthanatos. Also acts as a negative regulator of the cGAS-STING pathway by mediating poly-ADP-ribosylation and inactivation of cgas. Acts as a negative regulator of adipogenesis by catalyzing poly ADP-ribosylation of histone H2B on 'Glu-35' (H2BE35ADPr). This chain is Poly [ADP-ribose] polymerase 1 (parp1), found in Oncorhynchus masou (Cherry salmon).